The following is a 25-amino-acid chain: FPVDEEFQSPFGSRSRGYFLFRPRN.

At Asn25 the chain carries Asparagine amide.

It belongs to the NmU family.

It is found in the secreted. Functionally, stimulates uterine smooth muscle contraction and causes selective vasoconstriction. The polypeptide is Neuromedin-U-25 (NMU) (Oryctolagus cuniculus (Rabbit)).